Here is a 102-residue protein sequence, read N- to C-terminus: Small ribosomal subunit protein uS10 (102 aa).

This sequence belongs to the universal ribosomal protein uS10 family. In terms of assembly, part of the 30S ribosomal subunit.

In terms of biological role, involved in the binding of tRNA to the ribosomes. The sequence is that of Small ribosomal subunit protein uS10 from Nitrosopumilus maritimus (strain SCM1).